We begin with the raw amino-acid sequence, 313 residues long: Foldase protein PrsA (313 aa).

The signal sequence occupies residues 1–20; the sequence is MKKKLLAGAITLLSVATLAA. Cys-21 is lipidated: N-palmitoyl cysteine. Cys-21 carries S-diacylglycerol cysteine lipidation. Residues 143 to 241 form the PpiC domain; sequence TPDVTAQIIR…SQYYIVKLTK (99 aa).

This sequence belongs to the PrsA family.

The protein resides in the cell membrane. It carries out the reaction [protein]-peptidylproline (omega=180) = [protein]-peptidylproline (omega=0). In terms of biological role, plays a major role in protein secretion by helping the post-translocational extracellular folding of several secreted proteins. In Streptococcus pneumoniae (strain ATCC BAA-255 / R6), this protein is Foldase protein PrsA.